Consider the following 336-residue polypeptide: N-lysine methyltransferase KMT5A (336 aa).

The disordered stretch occupies residues 1-112 (MGRGKKMSKP…KPSEQRETEC (112 aa)). Residues 67–93 (SVAHHESKCPGKPLTETRKKAEVEKKR) are compositionally biased toward basic and acidic residues. An SET domain is found at 200-321 (EGMKMDMITG…VGEELLYDYG (122 aa)). Residues 210–212 (KGR), Y255, and 282–283 (NH) contribute to the S-adenosyl-L-methionine site.

The protein belongs to the class V-like SAM-binding methyltransferase superfamily. Histone-lysine methyltransferase family. PR/SET subfamily.

The protein localises to the nucleus. The protein resides in the chromosome. It carries out the reaction L-lysyl(20)-[histone H4] + S-adenosyl-L-methionine = N(6)-methyl-L-lysyl(20)-[histone H4] + S-adenosyl-L-homocysteine + H(+). The catalysed reaction is L-lysyl-[protein] + S-adenosyl-L-methionine = N(6)-methyl-L-lysyl-[protein] + S-adenosyl-L-homocysteine + H(+). Protein-lysine N-methyltransferase that monomethylates both histones and non-histone proteins. Specifically monomethylates 'Lys-20' of histone H4 (H4K20me1). H4K20me1 is enriched during mitosis and represents a specific tag for epigenetic transcriptional repression. Mainly functions in euchromatin regions, thereby playing a central role in the silencing of euchromatic genes. Required for cell proliferation, probably by contributing to the maintenance of proper higher-order structure of DNA during mitosis. Involved in chromosome condensation and proper cytokinesis. Nucleosomes are preferred as substrate compared to free histones. Mediates monomethylation of p53/TP53 at 'Lys-382', leading to repress p53/TP53-target genes. Plays a negative role in TGF-beta response regulation and a positive role in cell migration. This is N-lysine methyltransferase KMT5A from Xenopus tropicalis (Western clawed frog).